The sequence spans 155 residues: Large ribosomal subunit protein uL22c (155 aa).

Belongs to the universal ribosomal protein uL22 family. In terms of assembly, part of the 50S ribosomal subunit.

The protein localises to the plastid. The protein resides in the chloroplast. Its function is as follows. This protein binds specifically to 23S rRNA. In terms of biological role, the globular domain of the protein is located near the polypeptide exit tunnel on the outside of the subunit, while an extended beta-hairpin is found that lines the wall of the exit tunnel in the center of the 70S ribosome. This chain is Large ribosomal subunit protein uL22c (rpl22), found in Solanum tuberosum (Potato).